Consider the following 206-residue polypeptide: Imidazoleglycerol-phosphate dehydratase (206 aa).

The protein belongs to the imidazoleglycerol-phosphate dehydratase family.

Its subcellular location is the cytoplasm. The enzyme catalyses D-erythro-1-(imidazol-4-yl)glycerol 3-phosphate = 3-(imidazol-4-yl)-2-oxopropyl phosphate + H2O. It participates in amino-acid biosynthesis; L-histidine biosynthesis; L-histidine from 5-phospho-alpha-D-ribose 1-diphosphate: step 6/9. The chain is Imidazoleglycerol-phosphate dehydratase from Saccharopolyspora erythraea (strain ATCC 11635 / DSM 40517 / JCM 4748 / NBRC 13426 / NCIMB 8594 / NRRL 2338).